A 150-amino-acid polypeptide reads, in one-letter code: S-protein homolog 28 (150 aa).

N-linked (GlcNAc...) asparagine glycosylation occurs at Asn-122.

This sequence belongs to the plant self-incompatibility (S1) protein family.

The protein resides in the secreted. This is S-protein homolog 28 from Arabidopsis thaliana (Mouse-ear cress).